The primary structure comprises 431 residues: MRTGSMLRTISDSAIRDQAASTLSGKPRRWSWTAFFGPALIAAVAYIDPGNFATNIEAGSRYGYTLLWVVLAANLMAMLIQTLSARLGLATGQNLPQVIRARYPRPLVWCYWVQAEIVAIATDLAEFLGAALAFHLLFGLSLMEGALLTGTITYLALHLYRYGFRLMEILIGAMILAVAGGFILELVLSRPEPAPLLKGLLIPGFPDGYALYLAAGILGATVMPHVIYLHSALSQQRIQVKDDAHRLRLMRYYRLDVILGMAIAGLVNLSMLAMAAAVFHATGRLDVATISDSYLLLAPVVGQVTASHVFGLALLLAGLSSSIVGTLSGQVIMQGFVNVSIPLWLRRLVTMLPALAVIMLGISEQKALVASQVILSFGIPFALVPLLCFTANRQIMGNLVNRKSVTGVGTVVCTLIVALNVYVLFSTFTGH.

12 helical membrane passes run 30 to 50 (WSWT…IDPG), 63 to 83 (GYTL…IQTL), 106 to 126 (PLVW…DLAE), 137 to 159 (LFGL…ALHL), 169 to 189 (ILIG…LVLS), 209 to 229 (YALY…VIYL), 257 to 277 (VILG…MAAA), 287 to 307 (VATI…VTAS), 309 to 329 (VFGL…TLSG), 341 to 361 (IPLW…IMLG), 367 to 387 (ALVA…VPLL), and 405 to 425 (VTGV…YVLF).

Belongs to the NRAMP family.

It localises to the cell inner membrane. H(+)-stimulated, divalent metal cation uptake system. The chain is Divalent metal cation transporter MntH from Chromohalobacter salexigens (strain ATCC BAA-138 / DSM 3043 / CIP 106854 / NCIMB 13768 / 1H11).